The following is a 1316-amino-acid chain: MLDVNFFDELRIGLATAEDIRQWSYGEVKKPETINYRTLKPEKDGLFCEKIFGPTRDWECYCGKYKRVRFKGIICERCGVEVTRAKVRRERMGHIELAAPVTHIWYFKGVPSRLGYLLDLAPKDLEKIIYFAAYVITSVDNEMRHNELSTLEAEMMVERKAVEDQRDADLEARAQKLEADLAELEAEGAKADARRKVRDSGEREMRQLRDRAQRELDRLEDIWSTFTKLAPKQLIVDENLYRELQDRYGEYFTGAMGAESIQKLIETFDIDAEAEILRDVIRNGKGQKKLRALKRLKVVAAFQQSGNSPMGMVLDAVPVIPPELRPLVQLDGGRFATSDLNDLYRRVINRNNRLKRLIDLGAPEIIVNNEKRMLQESVDALFDNGRRGRPVTGPGNRPLKSLSDLLKGKQGRFRQNLLGKRVDYSGRSVIVVGPQLKLHQCGLPKLMALELFKPFVMKRLVDLNHAQNIKSAKRMVERQRPQVWDVLEEVIAEHPVLLNRAPTLHRLGIQAFEPMLVEGKAIQLHPLVCEAFNADFDGDQMAVHLPLSAEAQAEARILMLSSNNILSPASGRPLAMPRLDMVTGLYYLTTEVEGDKGAYQPAVQDSPETGVYSSPAEAIMAADRGVLSVRAKIKVRLTQLRPPAEIEDELFGHNGWQPGDAWTAETTLGRVLFNELLPLGYAFVNKQMHKKVQAAIINDLAERYPMIVVAQTVDKLKDSGFYWATRSGVTVSMADVLVPPRKKEILDSYEERAEKVEKQFQRGALNHDERNEALVEIWKEATDEVGQALREHYPADNPIITIVDSGATGNFTQTRTLAGMKGLVTNPKGEFIPRPIKSSFREGLTVLEYFINTHGARKGLADTALRTADSGYLTRRLVDVSQDVIVREHDCQTERGIMVELAERQGDGTLIRDPYIETSAYARTLGADAVDEAGNVVVARGEDLGDPEIEACLAAGITQVKVRSVLTCTTGTGVCATCYGRSMATGKLVDIGEAVGIVAAQSIGEPGTQLTMRTFHQGGVGEDITGGLPRVQELFEARVPRGKAPIADVTGRVRLEDGERFYTIAIVPDDGGEEVVYDKLSKRQRLRVFKHEDGSERVLSDGDHVEVGQQLMEGSADPHEVLRVQGPREVQIHLVREVQEVYRAQGVSIHDKHIEVIVRQMLRRVTIIDSGATEFLPGSLIDRAEFEAENRRVVAESGEPAAGRPVLMGITKASLATDSWLSAASFQETTRVLTDAAINCRSDKLNGLKENVIIGKLIPAGTGINRYRNIAVQPTEEARVAAYTIPSYEDQYYSPDFGQATGAAVPLDDYGYSDYR.

Zn(2+) is bound by residues cysteine 60, cysteine 62, cysteine 75, and cysteine 78. Residues aspartate 535, aspartate 537, and aspartate 539 each contribute to the Mg(2+) site. The Zn(2+) site is built by cysteine 891, cysteine 968, cysteine 975, and cysteine 978.

This sequence belongs to the RNA polymerase beta' chain family. As to quaternary structure, the RNAP catalytic core consists of 2 alpha, 1 beta, 1 beta' and 1 omega subunit. When a sigma factor is associated with the core the holoenzyme is formed, which can initiate transcription. Mg(2+) is required as a cofactor. Requires Zn(2+) as cofactor.

It catalyses the reaction RNA(n) + a ribonucleoside 5'-triphosphate = RNA(n+1) + diphosphate. Functionally, DNA-dependent RNA polymerase catalyzes the transcription of DNA into RNA using the four ribonucleoside triphosphates as substrates. The chain is DNA-directed RNA polymerase subunit beta' from Mycobacterium ulcerans (strain Agy99).